Here is a 106-residue protein sequence, read N- to C-terminus: UPF0145 protein BF0270 (106 aa).

Belongs to the UPF0145 family.

The sequence is that of UPF0145 protein BF0270 from Bacteroides fragilis (strain YCH46).